A 480-amino-acid chain; its full sequence is Protein nucleotidyltransferase YdiU (480 aa).

Glycine 86, glycine 88, arginine 89, lysine 109, aspartate 121, glycine 122, arginine 172, and arginine 179 together coordinate ATP. The active-site Proton acceptor is aspartate 248. 2 residues coordinate Mg(2+): asparagine 249 and aspartate 258. Residue aspartate 258 participates in ATP binding.

The protein belongs to the SELO family. Mg(2+) serves as cofactor. It depends on Mn(2+) as a cofactor.

The enzyme catalyses L-seryl-[protein] + ATP = 3-O-(5'-adenylyl)-L-seryl-[protein] + diphosphate. It catalyses the reaction L-threonyl-[protein] + ATP = 3-O-(5'-adenylyl)-L-threonyl-[protein] + diphosphate. It carries out the reaction L-tyrosyl-[protein] + ATP = O-(5'-adenylyl)-L-tyrosyl-[protein] + diphosphate. The catalysed reaction is L-histidyl-[protein] + UTP = N(tele)-(5'-uridylyl)-L-histidyl-[protein] + diphosphate. The enzyme catalyses L-seryl-[protein] + UTP = O-(5'-uridylyl)-L-seryl-[protein] + diphosphate. It catalyses the reaction L-tyrosyl-[protein] + UTP = O-(5'-uridylyl)-L-tyrosyl-[protein] + diphosphate. Its function is as follows. Nucleotidyltransferase involved in the post-translational modification of proteins. It can catalyze the addition of adenosine monophosphate (AMP) or uridine monophosphate (UMP) to a protein, resulting in modifications known as AMPylation and UMPylation. The chain is Protein nucleotidyltransferase YdiU from Salmonella typhi.